We begin with the raw amino-acid sequence, 1108 residues long: AP-3 complex subunit beta (1108 aa).

4 HEAT repeats span residues 90–127 (DSALLSINTIQKSLNDQSQVIRASALRVMSSIRVIDII), 327–363 (IEAQKVGKSLVRILRSGPEVQYITLTNISTMVTLRPS), 397–433 (ENIGKILKEFKEYVKNEDKKFVAATIQAIGSCASTVP), and 434–471 (DVTESCIYGLMSLLSNQSTVVVAESVIVLKRLLQLNAT). Residues 480–490 (KEKEKEKDVKE) show a composition bias toward basic and acidic residues. Disordered regions lie at residues 480 to 501 (KEKEKEKDVKENQSTISKHSSS), 736 to 797 (DEEE…YDGE), and 811 to 835 (LFGITNDDNNQTANGIGGGGSGEEE). 2 stretches are compositionally biased toward acidic residues: residues 736 to 764 (DEEEEDEEEYDEEEEEEEYEEQNEYEDFF) and 780 to 797 (YDEDEYNQDIDDGEYDGE).

This sequence belongs to the adaptor complexes large subunit family. Adaptor protein complex 3 (AP-3) is a heterotetramer composed of two large adaptins (delta-type subunit and beta-type subunit), a medium adaptin (mu-type subunit) and a small adaptin (sigma-type subunit).

It is found in the endosome membrane. Its function is as follows. Part of the AP-3 complex, an adaptor-related complex which is essential for the compartmentalization of the endocytic pathway. The sequence is that of AP-3 complex subunit beta (ap3b-1) from Dictyostelium discoideum (Social amoeba).